We begin with the raw amino-acid sequence, 785 residues long: Ubiquitin carboxyl-terminal hydrolase 1 (785 aa).

Disordered stretches follow at residues 1–21 (MPGV…SKKN) and 33–52 (TKRA…ASEY). The span at 7–16 (SESNGLSRGS) shows a compositional bias: polar residues. Residues Ser-16, Ser-42, and Ser-67 each carry the phosphoserine modification. Residues 81–785 (VGLNNLGNTC…TPYLLFYKKL (705 aa)) enclose the USP domain. Cys-90 (nucleophile) is an active-site residue. 2 stretches are compositionally biased toward basic and acidic residues: residues 258 to 275 (EDFK…KSDT) and 286 to 298 (LSKE…ENQR). The tract at residues 258 to 336 (EDFKEKLPKG…SPRPSQKKSR (79 aa)) is disordered. Residues Ser-313 and Ser-475 each carry the phosphoserine modification. Residue His-593 is the Proton acceptor of the active site. The tract at residues 693 to 723 (TAFAENRNSETSDTTGTHESDRNKESSDQTG) is disordered. The span at 708–719 (GTHESDRNKESS) shows a compositional bias: basic and acidic residues. Residue Ser-768 is modified to Phosphoserine.

It belongs to the peptidase C19 family. As to quaternary structure, interacts with FANCD2 and PCNA. Interacts with WDR48. Interacts with ATAD5; the interaction regulates USP1-mediated PCNA deubiquitination. Post-translationally, autocatalytic cleavage of USP1 following UV irradiation inactivates it, leading to an increase in ubiquitinated PCNA, recruitment of POLH and translesion synthesis. In terms of processing, ubiquitinated by the CRL2(KLHDC2) complex following autocatalytic cleavage, leading to its degradation: the CRL2(KLHDC2) complex recognizes the diglycine (Gly-Gly) at the C-terminus.

Its subcellular location is the nucleus. It catalyses the reaction Thiol-dependent hydrolysis of ester, thioester, amide, peptide and isopeptide bonds formed by the C-terminal Gly of ubiquitin (a 76-residue protein attached to proteins as an intracellular targeting signal).. Its function is as follows. Negative regulator of DNA damage repair which specifically deubiquitinates monoubiquitinated FANCD2. Also involved in PCNA-mediated translesion synthesis (TLS) by deubiquitinating monoubiquitinated PCNA. Has almost no deubiquitinating activity by itself and requires the interaction with WDR48 to have a high activity. The protein is Ubiquitin carboxyl-terminal hydrolase 1 (USP1) of Homo sapiens (Human).